A 426-amino-acid polypeptide reads, in one-letter code: Histidine--tRNA ligase (426 aa).

The protein belongs to the class-II aminoacyl-tRNA synthetase family. In terms of assembly, homodimer.

It is found in the cytoplasm. It carries out the reaction tRNA(His) + L-histidine + ATP = L-histidyl-tRNA(His) + AMP + diphosphate + H(+). This is Histidine--tRNA ligase from Geobacillus thermodenitrificans (strain NG80-2).